The chain runs to 326 residues: tRNA-dihydrouridine(20/20a) synthase (326 aa).

FMN-binding positions include 11–13 and Gln-63; that span reads PML. Catalysis depends on Cys-93, which acts as the Proton donor. Residues Lys-132, His-165, 205-207, and 227-228 each bind FMN; these read NGG and GR.

This sequence belongs to the Dus family. DusA subfamily. It depends on FMN as a cofactor.

It carries out the reaction 5,6-dihydrouridine(20) in tRNA + NADP(+) = uridine(20) in tRNA + NADPH + H(+). It catalyses the reaction 5,6-dihydrouridine(20) in tRNA + NAD(+) = uridine(20) in tRNA + NADH + H(+). The enzyme catalyses 5,6-dihydrouridine(20a) in tRNA + NADP(+) = uridine(20a) in tRNA + NADPH + H(+). The catalysed reaction is 5,6-dihydrouridine(20a) in tRNA + NAD(+) = uridine(20a) in tRNA + NADH + H(+). Catalyzes the synthesis of 5,6-dihydrouridine (D), a modified base found in the D-loop of most tRNAs, via the reduction of the C5-C6 double bond in target uridines. Specifically modifies U20 and U20a in tRNAs. The sequence is that of tRNA-dihydrouridine(20/20a) synthase from Vibrio vulnificus (strain CMCP6).